A 152-amino-acid chain; its full sequence is Snaclec coagulation factor IX/factor X-binding protein subunit A (152 aa).

Positions 1 to 23 (MGRFIFLSFGLLVVFLSLSGTGA) are cleaved as a signal peptide. Disulfide bonds link Cys25/Cys36, Cys53/Cys150, and Cys125/Cys142. A C-type lectin domain is found at 32–151 (YEGHCYNIFH…CGERNPFVCE (120 aa)). Positions 64, 66, and 70 each coordinate Ca(2+). Residue Glu151 participates in Ca(2+) binding.

Belongs to the snaclec family. As to quaternary structure, heterodimer of subunits A and B; disulfide-linked. As to expression, expressed by the venom gland.

Its subcellular location is the secreted. In terms of biological role, anticoagulant protein which binds to the gamma-carboxyglutamic acid-domain regions of factors IX (F9) and factor X (F10) in the presence of calcium with a 1 to 1 stoichiometry. The sequence is that of Snaclec coagulation factor IX/factor X-binding protein subunit A from Gloydius halys (Chinese water mocassin).